Here is a 283-residue protein sequence, read N- to C-terminus: Elongation factor Ts (283 aa).

The interval 80-83 (TDFV) is involved in Mg(2+) ion dislocation from EF-Tu.

Belongs to the EF-Ts family.

It localises to the cytoplasm. In terms of biological role, associates with the EF-Tu.GDP complex and induces the exchange of GDP to GTP. It remains bound to the aminoacyl-tRNA.EF-Tu.GTP complex up to the GTP hydrolysis stage on the ribosome. The protein is Elongation factor Ts of Haemophilus influenzae (strain PittEE).